The primary structure comprises 282 residues: Bifunctional protein FolD (282 aa).

NADP(+) contacts are provided by residues 164–166 and Ser189; that span reads GRS.

It belongs to the tetrahydrofolate dehydrogenase/cyclohydrolase family. Homodimer.

The enzyme catalyses (6R)-5,10-methylene-5,6,7,8-tetrahydrofolate + NADP(+) = (6R)-5,10-methenyltetrahydrofolate + NADPH. It carries out the reaction (6R)-5,10-methenyltetrahydrofolate + H2O = (6R)-10-formyltetrahydrofolate + H(+). It functions in the pathway one-carbon metabolism; tetrahydrofolate interconversion. In terms of biological role, catalyzes the oxidation of 5,10-methylenetetrahydrofolate to 5,10-methenyltetrahydrofolate and then the hydrolysis of 5,10-methenyltetrahydrofolate to 10-formyltetrahydrofolate. This Lachnoclostridium phytofermentans (strain ATCC 700394 / DSM 18823 / ISDg) (Clostridium phytofermentans) protein is Bifunctional protein FolD.